A 147-amino-acid chain; its full sequence is Large ribosomal subunit protein bL9 (147 aa).

It belongs to the bacterial ribosomal protein bL9 family.

Binds to the 23S rRNA. This chain is Large ribosomal subunit protein bL9, found in Bdellovibrio bacteriovorus (strain ATCC 15356 / DSM 50701 / NCIMB 9529 / HD100).